We begin with the raw amino-acid sequence, 227 residues long: MNIKNFLNNRLWKNNSSLVQLLGLCPVLAMTTNAINAIGLGMTTTLVLTITNTIISSFRKIIPKDLRIPIYMMIISSVVTSIEMLLHAYTFNLYQSLGIFIPLIVTNCIIVGRADLIAYKSSIVESFFDGIFIGLGSMFAMFAVGSIREILGNGTLFFGANKIISNIHSSVFFTLLDKKFTIILAVFPPGGFLILGFLIAIKNFIDLYYKKNTIKNIEQCSCSNKIK.

5 consecutive transmembrane segments (helical) span residues 34–56 (AINA…TIIS), 68–88 (IPIY…LLHA), 91–111 (FNLY…CIIV), 127–147 (FFDG…VGSI), and 181–201 (TIIL…LIAI).

It belongs to the NqrDE/RnfAE family. In terms of assembly, the complex is composed of six subunits: RnfA, RnfB, RnfC, RnfD, RnfE and RnfG.

Its subcellular location is the cell inner membrane. Part of a membrane-bound complex that couples electron transfer with translocation of ions across the membrane. This Buchnera aphidicola subsp. Acyrthosiphon pisum (strain 5A) protein is Ion-translocating oxidoreductase complex subunit E.